The sequence spans 141 residues: Lysozyme 1 (141 aa).

The N-terminal stretch at 1 to 19 is a signal peptide; the sequence is MKFFIVLVAALALAAPAMG. The C-type lysozyme domain maps to 20–141; the sequence is KTFTRCSLAR…GSLPSINDCF (122 aa). Disulfide bonds link Cys25-Cys140, Cys46-Cys130, Cys81-Cys97, and Cys93-Cys111. The active site involves Glu51. The N-linked (GlcNAc...) asparagine glycan is linked to Asn65. Asp69 is a catalytic residue. An N-linked (GlcNAc...) asparagine glycan is attached at Asn104.

This sequence belongs to the glycosyl hydrolase 22 family.

It catalyses the reaction Hydrolysis of (1-&gt;4)-beta-linkages between N-acetylmuramic acid and N-acetyl-D-glucosamine residues in a peptidoglycan and between N-acetyl-D-glucosamine residues in chitodextrins.. Functionally, may not function as a self-defense protein, but as a digestive enzyme, probably in the gut of the insect body. Inactive towards Micrococcus luteus. Active toward glycol chitin. This Musca domestica (House fly) protein is Lysozyme 1.